A 332-amino-acid chain; its full sequence is DNA-directed RNA polymerase subunit alpha (332 aa).

The segment at 1–244 (MKKHAKVYYS…AHLNLLADVE (244 aa)) is alpha N-terminal domain (alpha-NTD). The alpha C-terminal domain (alpha-CTD) stretch occupies residues 259-332 (IKEEPIRRFS…NYKNENKGEN (74 aa)).

It belongs to the RNA polymerase alpha chain family. As to quaternary structure, homodimer. The RNAP catalytic core consists of 2 alpha, 1 beta, 1 beta' and 1 omega subunit. When a sigma factor is associated with the core the holoenzyme is formed, which can initiate transcription.

The enzyme catalyses RNA(n) + a ribonucleoside 5'-triphosphate = RNA(n+1) + diphosphate. Functionally, DNA-dependent RNA polymerase catalyzes the transcription of DNA into RNA using the four ribonucleoside triphosphates as substrates. The polypeptide is DNA-directed RNA polymerase subunit alpha (Mesomycoplasma hyopneumoniae (strain 232) (Mycoplasma hyopneumoniae)).